The primary structure comprises 148 residues: uncharacterized protein (148 aa).

The next 4 membrane-spanning stretches (helical) occupy residues 29–49, 61–81, 99–119, and 121–141; these read FSLV…AAKE, PIIL…PLVM, FIVF…NGFL, and ILVS…TLCI.

The protein resides in the cell membrane. This is an uncharacterized protein from Bacillus subtilis (strain 168).